The primary structure comprises 85 residues: ATP synthase subunit c (85 aa).

Helical transmembrane passes span 10-30 and 53-73; these read IAVAIIVGLCALGTAVGFAVL and FIIAGLLDAVPMIGIVIALLF.

It belongs to the ATPase C chain family. In terms of assembly, F-type ATPases have 2 components, F(1) - the catalytic core - and F(0) - the membrane proton channel. F(1) has five subunits: alpha(3), beta(3), gamma(1), delta(1), epsilon(1). F(0) has three main subunits: a(1), b(2) and c(10-14). The alpha and beta chains form an alternating ring which encloses part of the gamma chain. F(1) is attached to F(0) by a central stalk formed by the gamma and epsilon chains, while a peripheral stalk is formed by the delta and b chains.

It is found in the cell inner membrane. Functionally, f(1)F(0) ATP synthase produces ATP from ADP in the presence of a proton or sodium gradient. F-type ATPases consist of two structural domains, F(1) containing the extramembraneous catalytic core and F(0) containing the membrane proton channel, linked together by a central stalk and a peripheral stalk. During catalysis, ATP synthesis in the catalytic domain of F(1) is coupled via a rotary mechanism of the central stalk subunits to proton translocation. Its function is as follows. Key component of the F(0) channel; it plays a direct role in translocation across the membrane. A homomeric c-ring of between 10-14 subunits forms the central stalk rotor element with the F(1) delta and epsilon subunits. The polypeptide is ATP synthase subunit c (Vibrio vulnificus (strain CMCP6)).